The following is a 671-amino-acid chain: DNA ligase (671 aa).

Residues 32–36 (DAEYD), 81–82 (SL), and Glu113 contribute to the NAD(+) site. Lys115 acts as the N6-AMP-lysine intermediate in catalysis. Residues Arg136, Glu173, Lys290, and Lys314 each contribute to the NAD(+) site. Zn(2+) contacts are provided by Cys408, Cys411, Cys426, and Cys432. In terms of domain architecture, BRCT spans 593 to 671 (EIDSPFAGKT…EAEMMRLLGE (79 aa)).

This sequence belongs to the NAD-dependent DNA ligase family. LigA subfamily. Mg(2+) serves as cofactor. The cofactor is Mn(2+).

The catalysed reaction is NAD(+) + (deoxyribonucleotide)n-3'-hydroxyl + 5'-phospho-(deoxyribonucleotide)m = (deoxyribonucleotide)n+m + AMP + beta-nicotinamide D-nucleotide.. In terms of biological role, DNA ligase that catalyzes the formation of phosphodiester linkages between 5'-phosphoryl and 3'-hydroxyl groups in double-stranded DNA using NAD as a coenzyme and as the energy source for the reaction. It is essential for DNA replication and repair of damaged DNA. The chain is DNA ligase from Klebsiella pneumoniae (strain 342).